Here is a 473-residue protein sequence, read N- to C-terminus: 3-isopropylmalate dehydratase large subunit (473 aa).

[4Fe-4S] cluster-binding residues include Cys-355, Cys-415, and Cys-418. A disordered region spans residues 423–452 (PDQLAPGERSASTSNRNFEGRQGKGGRTHL).

This sequence belongs to the aconitase/IPM isomerase family. LeuC type 1 subfamily. In terms of assembly, heterodimer of LeuC and LeuD. It depends on [4Fe-4S] cluster as a cofactor.

It catalyses the reaction (2R,3S)-3-isopropylmalate = (2S)-2-isopropylmalate. It functions in the pathway amino-acid biosynthesis; L-leucine biosynthesis; L-leucine from 3-methyl-2-oxobutanoate: step 2/4. Catalyzes the isomerization between 2-isopropylmalate and 3-isopropylmalate, via the formation of 2-isopropylmaleate. This chain is 3-isopropylmalate dehydratase large subunit, found in Corynebacterium jeikeium (strain K411).